Consider the following 487-residue polypeptide: DNA ligase (487 aa).

Lysine 159 (N6-AMP-lysine intermediate) is an active-site residue. 3 residues coordinate ATP: arginine 164, arginine 182, and glutamate 217. Residue glutamate 217 coordinates a divalent metal cation. Residues 229–237 (EGLDFLFDA) are interaction with the sliding clamp. Residue glutamate 344 coordinates a divalent metal cation. Positions 359 and 365 each coordinate ATP.

This sequence belongs to the ATP-dependent DNA ligase family. As to quaternary structure, interacts with the sliding clamp. It depends on a divalent metal cation as a cofactor.

The enzyme catalyses ATP + (deoxyribonucleotide)n-3'-hydroxyl + 5'-phospho-(deoxyribonucleotide)m = (deoxyribonucleotide)n+m + AMP + diphosphate.. Its function is as follows. DNA ligase, which is expressed in the early stage of lytic development, has been implicated in T4 DNA synthesis and genetic recombination. It may also play a role in T4 DNA repair. This chain is DNA ligase (30), found in Enterobacteria phage T4 (Bacteriophage T4).